Consider the following 928-residue polypeptide: Neuropilin-1 (928 aa).

The first 21 residues, 1–21 (MLLRLLSCCCWLLCSLRSSWA), serve as a signal peptide directing secretion. Over 22–860 (SRNDKCGDTI…PGNVLKTLDP (839 aa)) the chain is Extracellular. Cystine bridges form between C27–C54, C82–C104, and C147–C173. CUB domains follow at residues 27–141 (CGDT…YEVF) and 147–265 (CSRN…FSVV). N150 carries N-linked (GlcNAc...) asparagine glycosylation. Ca(2+) is bound by residues E195, D209, and D250. The cysteines at positions 206 and 228 are disulfide-linked. N-linked (GlcNAc...) asparagine glycosylation is found at N261, N300, and N523. 2 disulfides stabilise this stretch: C275-C424 and C431-C584. F5/8 type C domains are found at residues 275-424 (CKEA…LYGC) and 431-584 (CSRM…LLGC). A glycan (O-linked (Xyl...) (chondroitin sulfate) serine; alternate) is linked at S613. O-linked (Xyl...) (heparan sulfate) serine; alternate glycosylation occurs at S613. A disordered region spans residues 624-645 (GATGQSTETPTVEASPEEPDMT). Residues 625–635 (ATGQSTETPTV) are compositionally biased toward polar residues. Residues 646–812 (HSDLDCKFGW…NHISPSQCRA (167 aa)) enclose the MAM domain. S834 carries O-linked (Xyl...) (chondroitin sulfate) serine glycosylation. Residue N844 is glycosylated (N-linked (GlcNAc...) asparagine). The helical transmembrane segment at 861 to 883 (ILITIIAMSALGVLLGAICGVVL) threads the bilayer. The Cytoplasmic portion of the chain corresponds to 884–928 (YCACWHNGMSERNLSALENYNFELVDGVKLKKDKLNTQNSYSEAS).

It belongs to the neuropilin family. As to quaternary structure, homodimer, and heterodimer. Retinal ganglion cells and visual center neurons.

Its subcellular location is the mitochondrion membrane. The protein localises to the cell membrane. Its function is as follows. Receptor involved in the development of the cardiovascular system, in angiogenesis, in the formation of certain neuronal circuits and in organogenesis outside the nervous system. Mediates the chemorepulsant activity of semaphorins. Binding to VEGFA initiates a signaling pathway needed for motor neuron axon guidance and cell body migration, including for the caudal migration of facial motor neurons from rhombomere 4 to rhombomere 6 during embryonic development. Regulates mitochondrial iron transport via interaction. In Xenopus laevis (African clawed frog), this protein is Neuropilin-1 (nrp1).